Consider the following 1616-residue polypeptide: S-layer-related protein (1616 aa).

The signal sequence occupies residues 1 to 30 (MKSLLRKWNGMMIIALVISLLTPAWGKASA). The BIG2 domain occupies 1115–1185 (VKALKLDRGT…GSGTVQATYE (71 aa)). Disordered stretches follow at residues 1191–1244 (ARVS…DGRN), 1372–1455 (NKRN…GRAR), 1523–1554 (ARGRFRNRGVPTRRGADTRTDERDAHARREAG), and 1585–1616 (FAGGGSRPAGRTRGRTLRARPARLPVRKARPC). Gly residues predominate over residues 1199 to 1225 (STGGGSDTGSGTGSGSGGGSAGGGGTA). Residues 1372–1387 (NKRNRRLRKLRPKNRK) show a composition bias toward basic residues. The span at 1406–1416 (PPECSASCPPA) shows a compositional bias: low complexity. Residues 1438–1502 (WSPPRSASPT…ALDPAPAAAD (65 aa)) form the SLH domain. Positions 1536–1554 (RGADTRTDERDAHARREAG) are enriched in basic and acidic residues. Residues 1594–1616 (GRTRGRTLRARPARLPVRKARPC) are compositionally biased toward basic residues.

Its subcellular location is the secreted. The protein localises to the cell wall. The protein resides in the S-layer. In terms of biological role, the S-layer is a paracrystalline mono-layered assembly of proteins which coats the surface of bacteria. May play a role in the export of butirosin from the organism. In Niallia circulans (Bacillus circulans), this protein is S-layer-related protein (butB).